A 264-amino-acid polypeptide reads, in one-letter code: GATA transcription factor 2 (264 aa).

The span at 29–42 shows a compositional bias: low complexity; the sequence is SSSGGSTAATSSSS. 2 disordered regions span residues 29–57 and 96–192; these read SSSGGSTAATSSSSFPPPQNPSFHHHHLP and NPLG…TPQW. Polar residues predominate over residues 101-110; it reads TMTSVKTETS. A Nuclear localization signal motif is present at residues 114 to 121; sequence KPRSKRSR. Over residues 155 to 164 the composition is skewed to gly residues; it reads SGGGGGGGGR. The segment at 175-229 adopts a GATA-type zinc-finger fold; that stretch reads GGGMRRCTHCASEKTPQWRTGPLGPKTLCNACGVRFKSGRLVPEYRPASSPTFVL.

It belongs to the type IV zinc-finger family. Class A subfamily. As to expression, mostly expressed in roots. Also expressed in flowers and leaves, and to a lower extent in stems.

The protein localises to the nucleus. Functionally, transcriptional activator that specifically binds 5'-GATA-3' or 5'-GAT-3' motifs within gene promoters. May be involved in the regulation of some light-responsive genes. This is GATA transcription factor 2 (GATA2) from Arabidopsis thaliana (Mouse-ear cress).